A 520-amino-acid chain; its full sequence is Ribonuclease Y (520 aa).

A helical transmembrane segment spans residues 4 to 24 (TVWILISILLATVGAVVGFFV). A disordered region spans residues 86 to 116 (KQENRLMQKEENLDRKDETLDKREQQLEKKE). Residues 210-273 (TVSVVNLPND…ETARIALDKL (64 aa)) form the KH domain. Positions 336-429 (VLKHSMEVAY…VAAADALSAA (94 aa)) constitute an HD domain.

This sequence belongs to the RNase Y family.

It localises to the cell membrane. Functionally, endoribonuclease that initiates mRNA decay. The chain is Ribonuclease Y from Bacillus cereus (strain ATCC 10987 / NRS 248).